Reading from the N-terminus, the 434-residue chain is Maltotriose-binding protein (434 aa).

A signal peptide spans 1 to 20 (MRRATYAFALLAILVLGVVA). Residues 28-52 (TTTPTQTSPATQPTTTQTPTQTETQ) form a disordered region. The segment covering 29–52 (TTPTQTSPATQPTTTQTPTQTETQ) has biased composition (low complexity).

It belongs to the bacterial solute-binding protein 1 family.

In terms of biological role, involved in an abc transport system for maltotriose. Binds maltotriose much more tightly than maltose. This chain is Maltotriose-binding protein (malE), found in Pyrococcus furiosus (strain ATCC 43587 / DSM 3638 / JCM 8422 / Vc1).